The following is a 424-amino-acid chain: Enolase (424 aa).

Gln-163 lines the (2R)-2-phosphoglycerate pocket. The active-site Proton donor is Glu-204. Mg(2+) contacts are provided by Asp-241, Glu-284, and Asp-311. (2R)-2-phosphoglycerate is bound by residues Lys-336, Arg-365, Ser-366, and Lys-387. Lys-336 serves as the catalytic Proton acceptor.

The protein belongs to the enolase family. Requires Mg(2+) as cofactor.

The protein localises to the cytoplasm. Its subcellular location is the secreted. It is found in the cell surface. It carries out the reaction (2R)-2-phosphoglycerate = phosphoenolpyruvate + H2O. Its pathway is carbohydrate degradation; glycolysis; pyruvate from D-glyceraldehyde 3-phosphate: step 4/5. Catalyzes the reversible conversion of 2-phosphoglycerate (2-PG) into phosphoenolpyruvate (PEP). It is essential for the degradation of carbohydrates via glycolysis. The chain is Enolase from Dictyoglomus thermophilum (strain ATCC 35947 / DSM 3960 / H-6-12).